A 369-amino-acid polypeptide reads, in one-letter code: MRERISNAKRVVVKIGSSSLTNDEDGHTVDPNRINTIVNALQARMEAGSDLIVVSSGAVAAGMAPLGLSTRPTELAVKQAAAAVGQVHLMHQWGRSFARYGRPIGQVLLTAADAGKRDRARNAQRTIDKLRILGAVPIVNENDTVATTGVNFGDNDRLAAIVAHLVSADALVLLSDVDGLFDKNPTDPTAKFISEVRDGNDLKGVIAGDGGKVGTGGMASKVSAARLASRSGVPVLLTSAANIGPALEDAQVGTVFHPKDNRLSAWKFWALYAADTAGKIRLDDGAVEAVTSGGKSLLAVGITEIIGDFQQGEIVEILGPAGQIIGRGEVSYDSDTLQSMVGMQTQDLPDGMQRPVVHADYLSNYASRA.

Lys-14 is an ATP binding site. Positions 56, 143, and 155 each coordinate substrate. ATP contacts are provided by residues 175–176 and 215–221; these read SD and TGGMASK. Residues 277–351 form the PUA domain; sequence AGKIRLDDGA…GMQTQDLPDG (75 aa).

The protein belongs to the glutamate 5-kinase family.

It is found in the cytoplasm. The catalysed reaction is L-glutamate + ATP = L-glutamyl 5-phosphate + ADP. It participates in amino-acid biosynthesis; L-proline biosynthesis; L-glutamate 5-semialdehyde from L-glutamate: step 1/2. Catalyzes the transfer of a phosphate group to glutamate to form L-glutamate 5-phosphate. The chain is Glutamate 5-kinase from Corynebacterium glutamicum (strain ATCC 13032 / DSM 20300 / JCM 1318 / BCRC 11384 / CCUG 27702 / LMG 3730 / NBRC 12168 / NCIMB 10025 / NRRL B-2784 / 534).